A 362-amino-acid chain; its full sequence is Vignain (362 aa).

A signal peptide spans 1-20; the sequence is MATKKLLWVVLSFSLVLGVA. Positions 21-131 are cleaved as a propeptide — activation peptide; the sequence is NSFDFHDKDL…YEKVVSVPPS (111 aa). Intrachain disulfides connect cysteine 149–cysteine 191, cysteine 183–cysteine 224, and cysteine 282–cysteine 334. The active site involves cysteine 152. Active-site residues include histidine 288 and asparagine 309. Asparagine 326 and asparagine 346 each carry an N-linked (GlcNAc...) asparagine glycan. Residues 359–362 carry the Prevents secretion from ER motif; that stretch reads KDEL.

Belongs to the peptidase C1 family. In terms of assembly, monomer.

It localises to the endoplasmic reticulum lumen. Its function is as follows. Thought to be involved in the hydrolysis of stored seed proteins. The protein is Vignain of Phaseolus vulgaris (Kidney bean).